The primary structure comprises 716 residues: Iron-sulfur clusters transporter atm1, mitochondrial (716 aa).

Residues 1–18 (MAPSIKLSTMATSLHRAH) constitute a mitochondrion transit peptide. At 19 to 123 (GTSALLRRPR…PKGSWGDKAR (105 aa)) the chain is on the mitochondrial matrix side. Residues 57 to 87 (LFAPNGSAKDESKPAVSTVPKTTGRGPSDPL) form a disordered region. Residues 124–145 (VLLAIGLLVGGKVLNVQVPFYF) form a helical membrane-spanning segment. The 291-residue stretch at 124–414 (VLLAIGLLVG…LGSVYRELRQ (291 aa)) folds into the ABC transmembrane type-1 domain. The Mitochondrial intermembrane portion of the chain corresponds to 146 to 168 (REIVDSLNIDFSTTGGSVTAVAG). The chain crosses the membrane as a helical span at residues 169–192 (AMILGYGAARVGAVVSQELRNAVF). The Mitochondrial matrix segment spans residues 193–241 (ASVAQKAIRKVARNTFEHLLNLDLSFHLSKQTGGLTRAIDRGTKGISFL). A helical transmembrane segment spans residues 242 to 265 (LTSMVFHIVPTALEISMVCGILTY). Asparagine 266 is a topological domain (mitochondrial intermembrane). A helical transmembrane segment spans residues 267–287 (FGWQYAALTALTMVSYTAFTI). Residues 288–353 (LTTAWRTKFR…NSIKVATSLA (66 aa)) are Mitochondrial matrix-facing. Glutathione contacts are provided by residues 293–297 (RTKFR) and 356–359 (NSGQ). Residues 354–372 (FLNSGQNIIFSSALTVMMY) traverse the membrane as a helical segment. The Mitochondrial intermembrane portion of the chain corresponds to 373 to 387 (MGAHGVATGQLTVGD). Residues 388-409 (LVLINQLVFQLSVPLNFLGSVY) form a helical membrane-spanning segment. Glycine 406 provides a ligand contact to glutathione. Residues 410–716 (RELRQSLLDM…KEEVGEKKEA (307 aa)) are Mitochondrial matrix-facing. One can recognise an ABC transporter domain in the interval 449-690 (IEFKDVTFGY…NGVYAQLWRA (242 aa)). ATP-binding positions include tyrosine 458 and 482–493 (GPSGCGKSTLLR). The interval 697–716 (EEGEVSKKGEKEEVGEKKEA) is disordered. Positions 700–716 (EVSKKGEKEEVGEKKEA) are enriched in basic and acidic residues.

This sequence belongs to the ABC transporter superfamily. ABCB family. Heavy Metal importer (TC 3.A.1.210) subfamily. In terms of assembly, homodimer.

It is found in the mitochondrion inner membrane. Its function is as follows. Performs an essential function in the generation of cytoplasmic iron-sulfur proteins by mediating the ATP-dependent export of Fe/S cluster precursors synthesized by egt-3 and other mitochondrial proteins. Hydrolyzes ATP. Binds glutathione and may function by transporting a glutathione-conjugated iron-sulfur compound. This is Iron-sulfur clusters transporter atm1, mitochondrial from Neurospora crassa (strain ATCC 24698 / 74-OR23-1A / CBS 708.71 / DSM 1257 / FGSC 987).